The chain runs to 89 residues: Small ribosomal subunit protein uS15 (89 aa).

This sequence belongs to the universal ribosomal protein uS15 family. In terms of assembly, part of the 30S ribosomal subunit. Forms a bridge to the 50S subunit in the 70S ribosome, contacting the 23S rRNA.

One of the primary rRNA binding proteins, it binds directly to 16S rRNA where it helps nucleate assembly of the platform of the 30S subunit by binding and bridging several RNA helices of the 16S rRNA. Functionally, forms an intersubunit bridge (bridge B4) with the 23S rRNA of the 50S subunit in the ribosome. In Mesorhizobium japonicum (strain LMG 29417 / CECT 9101 / MAFF 303099) (Mesorhizobium loti (strain MAFF 303099)), this protein is Small ribosomal subunit protein uS15.